Consider the following 479-residue polypeptide: Aspartyl/glutamyl-tRNA(Asn/Gln) amidotransferase subunit B (479 aa).

Belongs to the GatB/GatE family. GatB subfamily. In terms of assembly, heterotrimer of A, B and C subunits.

It catalyses the reaction L-glutamyl-tRNA(Gln) + L-glutamine + ATP + H2O = L-glutaminyl-tRNA(Gln) + L-glutamate + ADP + phosphate + H(+). The catalysed reaction is L-aspartyl-tRNA(Asn) + L-glutamine + ATP + H2O = L-asparaginyl-tRNA(Asn) + L-glutamate + ADP + phosphate + 2 H(+). Functionally, allows the formation of correctly charged Asn-tRNA(Asn) or Gln-tRNA(Gln) through the transamidation of misacylated Asp-tRNA(Asn) or Glu-tRNA(Gln) in organisms which lack either or both of asparaginyl-tRNA or glutaminyl-tRNA synthetases. The reaction takes place in the presence of glutamine and ATP through an activated phospho-Asp-tRNA(Asn) or phospho-Glu-tRNA(Gln). In Streptococcus pyogenes serotype M6 (strain ATCC BAA-946 / MGAS10394), this protein is Aspartyl/glutamyl-tRNA(Asn/Gln) amidotransferase subunit B.